A 307-amino-acid polypeptide reads, in one-letter code: Quinolinate synthase (307 aa).

Residues His-20 and Ser-37 each contribute to the iminosuccinate site. Cys-82 serves as a coordination point for [4Fe-4S] cluster. Residues 108 to 110 and Ser-125 each bind iminosuccinate; that span reads YIN. Residue Cys-168 coordinates [4Fe-4S] cluster. Iminosuccinate is bound by residues 194 to 196 and Thr-219; that span reads HPE. Cys-264 provides a ligand contact to [4Fe-4S] cluster.

This sequence belongs to the quinolinate synthase family. Type 2 subfamily. Requires [4Fe-4S] cluster as cofactor.

Its subcellular location is the cytoplasm. It catalyses the reaction iminosuccinate + dihydroxyacetone phosphate = quinolinate + phosphate + 2 H2O + H(+). The protein operates within cofactor biosynthesis; NAD(+) biosynthesis; quinolinate from iminoaspartate: step 1/1. Functionally, catalyzes the condensation of iminoaspartate with dihydroxyacetone phosphate to form quinolinate. This Pyrobaculum aerophilum (strain ATCC 51768 / DSM 7523 / JCM 9630 / CIP 104966 / NBRC 100827 / IM2) protein is Quinolinate synthase.